We begin with the raw amino-acid sequence, 186 residues long: Phosphoheptose isomerase 1 (186 aa).

Positions 33–186 (LCECLKKGGK…TLCQIIDESF (154 aa)) constitute an SIS domain. 48-50 (NGG) provides a ligand contact to substrate. Zn(2+) contacts are provided by His57 and Glu61. Substrate is bound by residues Glu61, 90–91 (ND), 116–118 (STS), Ser121, and Gln168. Residues Gln168 and His176 each contribute to the Zn(2+) site.

The protein belongs to the SIS family. GmhA subfamily. Homotetramer. The cofactor is Zn(2+).

The protein resides in the cytoplasm. The enzyme catalyses 2 D-sedoheptulose 7-phosphate = D-glycero-alpha-D-manno-heptose 7-phosphate + D-glycero-beta-D-manno-heptose 7-phosphate. It participates in carbohydrate biosynthesis; D-glycero-D-manno-heptose 7-phosphate biosynthesis; D-glycero-alpha-D-manno-heptose 7-phosphate and D-glycero-beta-D-manno-heptose 7-phosphate from sedoheptulose 7-phosphate: step 1/1. It functions in the pathway bacterial outer membrane biogenesis; LOS core biosynthesis. Functionally, catalyzes the isomerization of sedoheptulose 7-phosphate in D-glycero-D-manno-heptose 7-phosphate. The polypeptide is Phosphoheptose isomerase 1 (gmhA1) (Campylobacter jejuni subsp. jejuni serotype O:2 (strain ATCC 700819 / NCTC 11168)).